Here is a 538-residue protein sequence, read N- to C-terminus: Phospho-2-dehydro-3-deoxyheptonate aldolase 1, chloroplastic (538 aa).

Residues 1-74 (MALSSTSTTN…KPSKSSPPAA (74 aa)) constitute a chloroplast transit peptide. The interval 55–82 (DSNKIPIVSDKPSKSSPPAATATTAPAP) is disordered. Residues 68 to 82 (KSSPPAATATTAPAP) show a composition bias toward low complexity. A Blocked amino end (Thr) modification is found at threonine 75.

The protein belongs to the class-II DAHP synthase family.

It localises to the plastid. The protein resides in the chloroplast. It carries out the reaction D-erythrose 4-phosphate + phosphoenolpyruvate + H2O = 7-phospho-2-dehydro-3-deoxy-D-arabino-heptonate + phosphate. The protein operates within metabolic intermediate biosynthesis; chorismate biosynthesis; chorismate from D-erythrose 4-phosphate and phosphoenolpyruvate: step 1/7. With respect to regulation, activation by tryptophan (a hysteretic factor). This Solanum tuberosum (Potato) protein is Phospho-2-dehydro-3-deoxyheptonate aldolase 1, chloroplastic (SHKA).